We begin with the raw amino-acid sequence, 693 residues long: Transforming growth factor beta activator LRRC33 (693 aa).

The signal sequence occupies residues 1-19 (MEFPPLWLCLGFHFLIVEW). Topologically, residues 20–651 (RSGPGTATAA…CKWEQVDTGL (632 aa)) are extracellular. The LRRNT domain maps to 29 to 56 (ASQGGCKVVDGVADCRGLNLASVPSSLP). LRR repeat units lie at residues 58–79 (HSRM…SLQA), 82–103 (RLEN…AFRE), 106–127 (HLRN…SAAA), 133–155 (GLRR…MLQN), 158–179 (SLEV…IFEG), 182–203 (HLVE…AFDG), 206–227 (ELRR…SLTQ), 228–239 (LRFLNVSYNILE), 251–272 (ELEI…PQCG), and 273–294 (KLHT…YNTS). Residues N74 and N85 are each glycosylated (N-linked (GlcNAc...) asparagine). An N-linked (GlcNAc...) asparagine glycan is attached at N155. An N-linked (GlcNAc...) asparagine glycan is attached at N232. N-linked (GlcNAc...) asparagine glycosylation is found at N292, N309, and N312. 11 LRR repeats span residues 329-350 (ALRF…FLKK), 353-374 (SLSH…EHEP), 377-398 (ALTE…PGLT), 403-424 (NLRV…LFDN), 427-448 (SITT…VPVD), 463-484 (SLRS…PFQG), 486-507 (SLTH…SPLW), 512-533 (TLQV…MDFS), 537-558 (NLRA…KGSL), 559-580 (ALRT…VVSE), and 585-605 (GLQT…EGWG). Residues N408 and N424 are each glycosylated (N-linked (GlcNAc...) asparagine). N-linked (GlcNAc...) asparagine glycosylation is present at N500. An LRRCT domain is found at 606–644 (ALQQHFKTVADLSMVTCNLSSKIVRVVELPEGLPQGCKW). N-linked (GlcNAc...) asparagine glycosylation is present at N623. A helical membrane pass occupies residues 652-672 (FYLVLILPSCLTLLVACTVVF). Over 673-693 (LTFKKPLLQVIKSRCHWSSIY) the chain is Cytoplasmic.

This sequence belongs to the LRRC32/LRRC33 family. In terms of assembly, interacts with TGFB1; associates via disulfide bonds with the Latency-associated peptide chain (LAP) regulatory chain of TGFB1, leading to regulate activation of TGF-beta-1. Interacts (via LRR repeats) with TLR2, TLR3, TLR4, TLR9 and probably other Toll-like receptors. Interacts with CYBB/NOX2; the interaction is direct. Post-translationally, N-glycosylated. In terms of tissue distribution, mainly expressed in cells of hematopoietic origin, such as in immune organs such as lymph nodes, thymus and spleen. Among leukocytes, expressed at higher level in myeloid cell such as macrophages, neutrophils and dendritic cells. Highly expressed in central nervous system-resident macrophages, including microglia and perivascular macrophages.

The protein localises to the cell membrane. Its subcellular location is the endoplasmic reticulum membrane. Its function is as follows. Key regulator of transforming growth factor beta-1 (TGFB1) specifically required for microglia function in the nervous system. Required for activation of latent TGF-beta-1 in macrophages and microglia: associates specifically via disulfide bonds with the Latency-associated peptide (LAP), which is the regulatory chain of TGFB1, and regulates integrin-dependent activation of TGF-beta-1. TGF-beta-1 activation mediated by LRRC33/NRROS is highly localized: there is little spreading of TGF-beta-1 activated from one microglial cell to neighboring microglia, suggesting the existence of localized and selective activation of TGF-beta-1 by LRRC33/NRROS. Indirectly plays a role in Toll-like receptor (TLR) signaling: ability to inhibit TLR-mediated NF-kappa-B activation and cytokine production is probably a consequence of its role in TGF-beta-1 signaling. The protein is Transforming growth factor beta activator LRRC33 of Mus musculus (Mouse).